Here is a 97-residue protein sequence, read N- to C-terminus: Large ribosomal subunit protein uL23 (97 aa).

This sequence belongs to the universal ribosomal protein uL23 family. Part of the 50S ribosomal subunit. Contacts protein L29, and trigger factor when it is bound to the ribosome.

One of the early assembly proteins it binds 23S rRNA. One of the proteins that surrounds the polypeptide exit tunnel on the outside of the ribosome. Forms the main docking site for trigger factor binding to the ribosome. The protein is Large ribosomal subunit protein uL23 of Anaeromyxobacter dehalogenans (strain 2CP-1 / ATCC BAA-258).